A 795-amino-acid polypeptide reads, in one-letter code: Protein translocase subunit SecA 2 (795 aa).

ATP-binding positions include Gln-84, 102–106, and Asp-496; that span reads GEGKT.

The protein belongs to the SecA family. As to quaternary structure, monomer and homodimer. Part of the essential Sec protein translocation apparatus which comprises SecA, SecYEG and auxiliary proteins SecDF. Other proteins may also be involved.

It localises to the cell membrane. Its subcellular location is the cytoplasm. It catalyses the reaction ATP + H2O + cellular proteinSide 1 = ADP + phosphate + cellular proteinSide 2.. Part of the Sec protein translocase complex. Interacts with the SecYEG preprotein conducting channel. Has a central role in coupling the hydrolysis of ATP to the transfer of proteins into and across the cell membrane, serving as an ATP-driven molecular motor driving the stepwise translocation of polypeptide chains across the membrane. This chain is Protein translocase subunit SecA 2, found in Streptococcus agalactiae serotype V (strain ATCC BAA-611 / 2603 V/R).